The sequence spans 327 residues: Putative ABC transporter ATP-binding protein MM_0887 (327 aa).

The tract at residues 1 to 44 (MSKSTPLKSSIIRADLPEQAEGRTGPETGKDPEKTGNSEGKTDT) is disordered. Over residues 28 to 44 (TGKDPEKTGNSEGKTDT) the composition is skewed to basic and acidic residues. The region spanning 47–282 (IEIKDLCHRY…PALLRKAHLR (236 aa)) is the ABC transporter domain. Residue 81-88 (GANGAGKS) participates in ATP binding.

This sequence belongs to the ABC transporter superfamily.

It localises to the cell membrane. In terms of biological role, probably part of an ABC transporter complex. Responsible for energy coupling to the transport system. The protein is Putative ABC transporter ATP-binding protein MM_0887 of Methanosarcina mazei (strain ATCC BAA-159 / DSM 3647 / Goe1 / Go1 / JCM 11833 / OCM 88) (Methanosarcina frisia).